Reading from the N-terminus, the 582-residue chain is Putative transcriptional regulator HVO_1357 (582 aa).

The 111-residue stretch at valine 19–leucine 129 folds into the Response regulatory domain. The residue at position 67 (aspartate 67) is a 4-aspartylphosphate. The stretch at leucine 165–valine 203 forms a coiled coil. The HTH bat-type domain maps to leucine 517–glutamate 569.

Functionally, may be part of a signal-dependent gene regulation cascade that is relevant to swimming motility. May be involved in the transcription regulation of target genes. The protein is Putative transcriptional regulator HVO_1357 of Haloferax volcanii (strain ATCC 29605 / DSM 3757 / JCM 8879 / NBRC 14742 / NCIMB 2012 / VKM B-1768 / DS2) (Halobacterium volcanii).